We begin with the raw amino-acid sequence, 556 residues long: Testis-specific protein 10-interacting protein (556 aa).

Residues 1–20 (MGQETNMLNAHQQLVRTSSG) show a composition bias toward polar residues. Disordered regions lie at residues 1-102 (MGQE…SPRK) and 180-320 (CTSI…GPWD). Residues 75–85 (KDRRLRGRNKK) show a composition bias toward basic residues. 2 stretches are compositionally biased toward acidic residues: residues 213 to 225 (EPEE…LGAE) and 246 to 260 (LEEE…EAED). Positions 266–278 (PWRRRTSSRRKGR) are enriched in basic residues. A compositionally biased stretch (basic and acidic residues) spans 304-320 (EPQRRKPRAKELEGPWD). The stretch at 387–463 (LRAWELQQRE…ELQGIQHRVQ (77 aa)) forms a coiled coil. The segment at 503 to 556 (AGKRDMEGAPRRHRSHRSVGARMEPSSQSPPKMEPTGSQADQHFAPNPDQELSP) is disordered. Positions 527–543 (PSSQSPPKMEPTGSQAD) are enriched in polar residues.

The sequence is that of Testis-specific protein 10-interacting protein (TSGA10IP) from Bos taurus (Bovine).